The primary structure comprises 139 residues: Probable disulfide formation protein C 2 (139 aa).

The helical transmembrane segment at 6–25 threads the bilayer; that stretch reads KYHIAIAWMIATSAMLISLF. C35 and C38 are oxidised to a cystine. The next 2 membrane-spanning stretches (helical) occupy residues 40-59 and 66-83; these read YQRM…MYRK and YAFP…YQIT. C95 and C101 are oxidised to a cystine. Residues 110–133 form a helical membrane-spanning segment; sequence GFISIPMLSFIGFLVIIILIYIES.

Belongs to the DsbB family. BdbC subfamily.

Its subcellular location is the cell membrane. Required for disulfide bond formation in some proteins. This is Probable disulfide formation protein C 2 (bdbC2) from Bacillus cereus (strain ATCC 10987 / NRS 248).